The sequence spans 755 residues: Photosystem I P700 chlorophyll a apoprotein A1 (755 aa).

Helical transmembrane passes span 72-95, 158-181, 197-221, 297-315, 352-375, 391-417, 439-461, and 536-554; these read IFSA…YHGA, LLCT…FHYH, LNHH…HVAI, QAHH…GHMY, WHAQ…QHMY, ISLF…IYMV, AIIS…FYVH, and FMVH…LILL. [4Fe-4S] cluster-binding residues include cysteine 578 and cysteine 587. The next 2 helical transmembrane spans lie at 594 to 615 and 669 to 691; these read HVFL…HFSW and LSAY…MFLF. Chlorophyll a' is bound at residue histidine 680. Chlorophyll a contacts are provided by methionine 688 and tyrosine 696. Residue tryptophan 697 coordinates phylloquinone. Residues 729–749 traverse the membrane as a helical segment; that stretch reads AVGVAHYLLGGIVTTWAFFLA.

This sequence belongs to the PsaA/PsaB family. As to quaternary structure, the PsaA/B heterodimer binds the P700 chlorophyll special pair and subsequent electron acceptors. PSI consists of a core antenna complex that captures photons, and an electron transfer chain that converts photonic excitation into a charge separation. The cyanobacterial PSI reaction center is composed of one copy each of PsaA,B,C,D,E,F,I,J,K,L,M and X, and forms trimeric complexes. PSI electron transfer chain: 5 chlorophyll a, 1 chlorophyll a', 2 phylloquinones and 3 4Fe-4S clusters. PSI core antenna: 90 chlorophyll a, 22 carotenoids, 3 phospholipids and 1 galactolipid. P700 is a chlorophyll a/chlorophyll a' dimer, A0 is one or more chlorophyll a, A1 is one or both phylloquinones and FX is a shared 4Fe-4S iron-sulfur center. serves as cofactor.

The protein resides in the cellular thylakoid membrane. It catalyses the reaction reduced [plastocyanin] + hnu + oxidized [2Fe-2S]-[ferredoxin] = oxidized [plastocyanin] + reduced [2Fe-2S]-[ferredoxin]. PsaA and PsaB bind P700, the primary electron donor of photosystem I (PSI), as well as the electron acceptors A0, A1 and FX. PSI is a plastocyanin/cytochrome c6-ferredoxin oxidoreductase, converting photonic excitation into a charge separation, which transfers an electron from the donor P700 chlorophyll pair to the spectroscopically characterized acceptors A0, A1, FX, FA and FB in turn. Oxidized P700 is reduced on the lumenal side of the thylakoid membrane by plastocyanin or cytochrome c6. The sequence is that of Photosystem I P700 chlorophyll a apoprotein A1 from Synechococcus sp. (strain JA-2-3B'a(2-13)) (Cyanobacteria bacterium Yellowstone B-Prime).